A 455-amino-acid polypeptide reads, in one-letter code: Bifunctional protein GlmU (455 aa).

A pyrophosphorylase region spans residues 1-230 (MANRFAVILA…FDETIGINDR (230 aa)). UDP-N-acetyl-alpha-D-glucosamine-binding positions include 9–12 (LAAG), K23, Q73, and 78–79 (GT). D103 is a binding site for Mg(2+). 4 residues coordinate UDP-N-acetyl-alpha-D-glucosamine: G140, E155, N170, and N228. N228 contributes to the Mg(2+) binding site. The tract at residues 231–251 (IALAEAEKIMKKRINEQHMRN) is linker. The segment at 252–455 (GVSIIDPEQT…KEEYASKFKK (204 aa)) is N-acetyltransferase. R333 and K351 together coordinate UDP-N-acetyl-alpha-D-glucosamine. H363 serves as the catalytic Proton acceptor. Positions 366 and 377 each coordinate UDP-N-acetyl-alpha-D-glucosamine. Residues 386-387 (NY), A423, and R440 contribute to the acetyl-CoA site.

It in the N-terminal section; belongs to the N-acetylglucosamine-1-phosphate uridyltransferase family. The protein in the C-terminal section; belongs to the transferase hexapeptide repeat family. Homotrimer. Mg(2+) is required as a cofactor.

Its subcellular location is the cytoplasm. It carries out the reaction alpha-D-glucosamine 1-phosphate + acetyl-CoA = N-acetyl-alpha-D-glucosamine 1-phosphate + CoA + H(+). It catalyses the reaction N-acetyl-alpha-D-glucosamine 1-phosphate + UTP + H(+) = UDP-N-acetyl-alpha-D-glucosamine + diphosphate. Its pathway is nucleotide-sugar biosynthesis; UDP-N-acetyl-alpha-D-glucosamine biosynthesis; N-acetyl-alpha-D-glucosamine 1-phosphate from alpha-D-glucosamine 6-phosphate (route II): step 2/2. It participates in nucleotide-sugar biosynthesis; UDP-N-acetyl-alpha-D-glucosamine biosynthesis; UDP-N-acetyl-alpha-D-glucosamine from N-acetyl-alpha-D-glucosamine 1-phosphate: step 1/1. The protein operates within bacterial outer membrane biogenesis; LPS lipid A biosynthesis. Its function is as follows. Catalyzes the last two sequential reactions in the de novo biosynthetic pathway for UDP-N-acetylglucosamine (UDP-GlcNAc). The C-terminal domain catalyzes the transfer of acetyl group from acetyl coenzyme A to glucosamine-1-phosphate (GlcN-1-P) to produce N-acetylglucosamine-1-phosphate (GlcNAc-1-P), which is converted into UDP-GlcNAc by the transfer of uridine 5-monophosphate (from uridine 5-triphosphate), a reaction catalyzed by the N-terminal domain. The protein is Bifunctional protein GlmU of Oceanobacillus iheyensis (strain DSM 14371 / CIP 107618 / JCM 11309 / KCTC 3954 / HTE831).